A 476-amino-acid chain; its full sequence is tRNA(Ile)-lysidine synthase (476 aa).

Position 30-35 (30-35) interacts with ATP; it reads SGGPDS.

This sequence belongs to the tRNA(Ile)-lysidine synthase family.

It localises to the cytoplasm. The enzyme catalyses cytidine(34) in tRNA(Ile2) + L-lysine + ATP = lysidine(34) in tRNA(Ile2) + AMP + diphosphate + H(+). Its function is as follows. Ligates lysine onto the cytidine present at position 34 of the AUA codon-specific tRNA(Ile) that contains the anticodon CAU, in an ATP-dependent manner. Cytidine is converted to lysidine, thus changing the amino acid specificity of the tRNA from methionine to isoleucine. The polypeptide is tRNA(Ile)-lysidine synthase (Bacillus cereus (strain ATCC 10987 / NRS 248)).